A 27-amino-acid chain; its full sequence is U18-ctenitoxin-Co1a (27 aa).

This sequence belongs to the u18-CNTX family. Expressed by the venom gland.

It is found in the secreted. Its function is as follows. Not toxic to mice by intracerebroventricular injection. This is U18-ctenitoxin-Co1a from Ctenus ornatus (Brazilian spider).